A 206-amino-acid polypeptide reads, in one-letter code: dCTP deaminase, dUMP-forming (206 aa).

DCTP is bound by residues 117–122, aspartate 135, 143–145, glutamine 163, tyrosine 177, lysine 184, and glutamine 188; these read RSSFGR and TLE. Glutamate 145 serves as the catalytic Proton donor/acceptor.

This sequence belongs to the dCTP deaminase family. As to quaternary structure, homotrimer.

It carries out the reaction dCTP + 2 H2O = dUMP + NH4(+) + diphosphate. The protein operates within pyrimidine metabolism; dUMP biosynthesis; dUMP from dCTP: step 1/1. Bifunctional enzyme that catalyzes both the deamination of dCTP to dUTP and the hydrolysis of dUTP to dUMP without releasing the toxic dUTP intermediate. The protein is dCTP deaminase, dUMP-forming of Methanococcus maripaludis (strain C7 / ATCC BAA-1331).